The sequence spans 330 residues: Aspartate--ammonia ligase (330 aa).

It belongs to the class-II aminoacyl-tRNA synthetase family. AsnA subfamily. Homodimer.

It localises to the cytoplasm. The catalysed reaction is L-aspartate + NH4(+) + ATP = L-asparagine + AMP + diphosphate + H(+). Its pathway is amino-acid biosynthesis; L-asparagine biosynthesis; L-asparagine from L-aspartate (ammonia route): step 1/1. The chain is Aspartate--ammonia ligase from Salmonella typhimurium (strain LT2 / SGSC1412 / ATCC 700720).